The primary structure comprises 555 residues: Glutamate--tRNA ligase (555 aa).

A 'HIGH' region motif is present at residues 100 to 110 (PNPSGPLHIGH).

The protein belongs to the class-I aminoacyl-tRNA synthetase family. Glutamate--tRNA ligase type 2 subfamily.

The protein resides in the cytoplasm. It catalyses the reaction tRNA(Glu) + L-glutamate + ATP = L-glutamyl-tRNA(Glu) + AMP + diphosphate. In terms of biological role, catalyzes the attachment of glutamate to tRNA(Glu) in a two-step reaction: glutamate is first activated by ATP to form Glu-AMP and then transferred to the acceptor end of tRNA(Glu). This is Glutamate--tRNA ligase from Methanococcus maripaludis (strain C6 / ATCC BAA-1332).